Reading from the N-terminus, the 865-residue chain is Probable beta-glucosidase J (865 aa).

Residue Asp233 is part of the active site. N-linked (GlcNAc...) asparagine glycosylation is found at Asn330, Asn447, Asn503, and Asn764. Positions 411-579 (TGQPGYTFRV…DTDTAIQQAV (169 aa)) constitute a PA14 domain.

The protein belongs to the glycosyl hydrolase 3 family.

It is found in the secreted. It catalyses the reaction Hydrolysis of terminal, non-reducing beta-D-glucosyl residues with release of beta-D-glucose.. The protein operates within glycan metabolism; cellulose degradation. Its function is as follows. Beta-glucosidases are one of a number of cellulolytic enzymes involved in the degradation of cellulosic biomass. Catalyzes the last step releasing glucose from the inhibitory cellobiose. In Aspergillus fumigatus (strain ATCC MYA-4609 / CBS 101355 / FGSC A1100 / Af293) (Neosartorya fumigata), this protein is Probable beta-glucosidase J (bglJ).